We begin with the raw amino-acid sequence, 456 residues long: Cobyrinate a,c-diamide synthase (456 aa).

Residues 247–439 (PIAIARDRAF…LHLHFGGKPW (193 aa)) enclose the GATase cobBQ-type domain. Catalysis depends on Cys330, which acts as the Nucleophile.

The protein belongs to the CobB/CbiA family. Requires Mg(2+) as cofactor.

It carries out the reaction cob(II)yrinate + 2 L-glutamine + 2 ATP + 2 H2O = cob(II)yrinate a,c diamide + 2 L-glutamate + 2 ADP + 2 phosphate + 2 H(+). Its pathway is cofactor biosynthesis; adenosylcobalamin biosynthesis; cob(II)yrinate a,c-diamide from sirohydrochlorin (anaerobic route): step 10/10. Functionally, catalyzes the ATP-dependent amidation of the two carboxylate groups at positions a and c of cobyrinate, using either L-glutamine or ammonia as the nitrogen source. This Synechococcus sp. (strain ATCC 27144 / PCC 6301 / SAUG 1402/1) (Anacystis nidulans) protein is Cobyrinate a,c-diamide synthase.